The sequence spans 297 residues: Cell division protein FtsQ (297 aa).

The Cytoplasmic segment spans residues 1-33; it reads MRPLSFRRRTAQARPDPAPSRLSYRVQRLLLTP. The helical transmembrane segment at 34 to 54 threads the bilayer; it reads LFHALIRVGLPAFVLAFGVGW. Topologically, residues 55–297 are periplasmic; that stretch reads LLQNQELRDE…IRGLTNDRIE (243 aa). Positions 82-150 constitute a POTRA domain; sequence FMVNAMSVSG…GILAIEIVER (69 aa).

The protein belongs to the FtsQ/DivIB family. FtsQ subfamily.

The protein resides in the cell inner membrane. In terms of biological role, essential cell division protein. This is Cell division protein FtsQ from Dinoroseobacter shibae (strain DSM 16493 / NCIMB 14021 / DFL 12).